Here is a 686-residue protein sequence, read N- to C-terminus: tRNA 5-methylaminomethyl-2-thiouridine biosynthesis bifunctional protein MnmC (686 aa).

A tRNA (mnm(5)s(2)U34)-methyltransferase region spans residues 1–258; the sequence is MPNIPLRVNS…RRALRRQQLD (258 aa). The tract at residues 276–686 is FAD-dependent cmnm(5)s(2)U34 oxidoreductase; sequence IGGGVASANL…MRKLIKGKAL (411 aa).

The protein in the N-terminal section; belongs to the methyltransferase superfamily. tRNA (mnm(5)s(2)U34)-methyltransferase family. It in the C-terminal section; belongs to the DAO family. FAD is required as a cofactor.

The protein resides in the cytoplasm. It carries out the reaction 5-aminomethyl-2-thiouridine(34) in tRNA + S-adenosyl-L-methionine = 5-methylaminomethyl-2-thiouridine(34) in tRNA + S-adenosyl-L-homocysteine + H(+). Its function is as follows. Catalyzes the last two steps in the biosynthesis of 5-methylaminomethyl-2-thiouridine (mnm(5)s(2)U) at the wobble position (U34) in tRNA. Catalyzes the FAD-dependent demodification of cmnm(5)s(2)U34 to nm(5)s(2)U34, followed by the transfer of a methyl group from S-adenosyl-L-methionine to nm(5)s(2)U34, to form mnm(5)s(2)U34. The protein is tRNA 5-methylaminomethyl-2-thiouridine biosynthesis bifunctional protein MnmC of Shewanella loihica (strain ATCC BAA-1088 / PV-4).